A 448-amino-acid polypeptide reads, in one-letter code: Metacaspase-1 (448 aa).

The disordered stretch occupies residues 1-129; sequence MFPGQGRHTY…GHYSRPPTDS (129 aa). Positions 10 to 44 are enriched in low complexity; that stretch reads YGGQQSNYSNQQQGYDQGYNQGYGQAYGQEYNQGY. Over residues 61–70 the composition is skewed to pro residues; that stretch reads SGPPPGPPPG. The span at 99 to 114 shows a compositional bias: polar residues; the sequence is YGNNQTRGSGNEQNYG. Catalysis depends on residues histidine 231 and cysteine 292.

This sequence belongs to the peptidase C14B family.

In terms of biological role, involved in cell death (apoptosis). This is Metacaspase-1 (MCA1) from Candida albicans (strain SC5314 / ATCC MYA-2876) (Yeast).